The primary structure comprises 133 residues: Small ribosomal subunit protein eS24z (133 aa).

Residues 104–133 form a disordered region; that stretch reads KSRKQIKERKNRAKKIRGVKKTKAGDAKKK. The span at 109–125 shows a compositional bias: basic residues; sequence IKERKNRAKKIRGVKKT.

The protein belongs to the eukaryotic ribosomal protein eS24 family.

This chain is Small ribosomal subunit protein eS24z (RPS24A), found in Arabidopsis thaliana (Mouse-ear cress).